Consider the following 603-residue polypeptide: MEGSDFLLAGVLFLFAAVAAVPLASRLGIGAVLGYLLAGIAIGPWGLGFISDVDEILHFSELGVVFLMFIIGLELNPSKLWQLRRSIFGVGAAQVLLSAALLAGLLMLTDFAWQAAVVGGIGLAMSSTAMALQLMREKGMNRSESGQLGFSVLLFQDLAVIPALALVPLLAGSADEHFDWMKIGMKVLAFVGMLIGGRYLLRPVFRFIAASGVREVFTAATLLLVLGSALFMDALGLSMALGTFIAGVLLAESEYRHELETAIDPFKGLLLGLFFISVGMSLNLGVLYTHLLWVVISVVVLVAVKILVLYLLARLYGVRSSERMQFAGVLSQGGEFAFVLFSTASSQRLFQGDQMALLLVTVTVTLSMMTTPLLMKLVDKWLSRQFNGPEEEDEKPWVNDDKPQVIVVGFGRFGQVIGRLLMANKMRITVLERDISAVNLMRKYGYKVYYGDATQVDLLRSAGAEAAESIVITCNEPEDTMKLVEICQQHFPHLHILARARGRVEAHELLQAGVTQFSRETFSSALELGRKTLVTLGMHPHQAQRAQLHFRRLDMRMLRELIPMHADTVQISRAREARRELEEIFQREMQQERRQLDGWDEFE.

13 helical membrane passes run 4–24 (SDFL…VPLA), 29–49 (IGAV…GLGF), 55–75 (EILH…GLEL), 87–107 (IFGV…GLLM), 115–135 (AAVV…LQLM), 152–172 (VLLF…LLAG), 177–197 (HFDW…LIGG), 207–227 (FIAA…LVLG), 230–250 (LFMD…GVLL), 268–288 (GLLL…GVLY), 291–311 (LLWV…VLYL), 324–344 (MQFA…FSTA), and 355–375 (MALL…PLLM). The RCK N-terminal domain occupies 402–521 (KPQVIVVGFG…AGVTQFSRET (120 aa)).

This sequence belongs to the monovalent cation:proton antiporter 2 (CPA2) transporter (TC 2.A.37) family. KefB subfamily. Interacts with the regulatory subunit KefG.

Its subcellular location is the cell inner membrane. Its function is as follows. Pore-forming subunit of a potassium efflux system that confers protection against electrophiles. Catalyzes K(+)/H(+) antiport. In Shigella boydii serotype 4 (strain Sb227), this protein is Glutathione-regulated potassium-efflux system protein KefB.